Reading from the N-terminus, the 218-residue chain is Small ribosomal subunit protein uS3 (218 aa).

The region spanning 38 to 107 (VREYIEKRLK…RVHVNVVEVK (70 aa)) is the KH type-2 domain.

This sequence belongs to the universal ribosomal protein uS3 family. As to quaternary structure, part of the 30S ribosomal subunit. Forms a tight complex with proteins S10 and S14.

Its function is as follows. Binds the lower part of the 30S subunit head. Binds mRNA in the 70S ribosome, positioning it for translation. This Exiguobacterium sibiricum (strain DSM 17290 / CCUG 55495 / CIP 109462 / JCM 13490 / 255-15) protein is Small ribosomal subunit protein uS3.